A 152-amino-acid polypeptide reads, in one-letter code: Superoxide dismutase [Cu-Zn] (152 aa).

3 residues coordinate Cu cation: His-45, His-47, and His-62. The cysteines at positions 56 and 145 are disulfide-linked. Zn(2+) contacts are provided by His-62, His-70, His-79, and Asp-82. Cu cation is bound at residue His-119.

The protein belongs to the Cu-Zn superoxide dismutase family. As to quaternary structure, homodimer. Cu cation is required as a cofactor. It depends on Zn(2+) as a cofactor.

Its subcellular location is the cytoplasm. The catalysed reaction is 2 superoxide + 2 H(+) = H2O2 + O2. Destroys radicals which are normally produced within the cells and which are toxic to biological systems. This Paulownia kawakamii (Dragon tree) protein is Superoxide dismutase [Cu-Zn] (SODCC).